A 408-amino-acid polypeptide reads, in one-letter code: MKSVEWFTWGVFLLLSGFGEAGRMGLGFQEKNPVFVKEKQSPFYAVPSNYEEVEFSSIVEPMYSGIATFGRLENVECLSKRSEDFDIAFIGMPFDTGTSYRPGARFGPSSLREGSRRINTKYGAVNVPLEINPFKSWAKLVDCGDIPVTTYDILKAMDQLESAYFQLIARKPSSFTDHDGFAKNDTVLPRVLSLGGDHTIVLPILRALHRVYGQPISVIHFDSHLDTWAPGLIGDGDEADGINHGSYFYFASQEGIMSKDANIHAGIRTPISSFSDYDDDVDCGFKIIEAREIDDLGIDGIVKKIRDRVGDNLVYLSIDIDVLDPAFAPATGTPETGGWSSREMRAILRGLQGLKFVGADLVEVAPAYDVAEITSLAGAQLLFDIVSMMVKYPLVKEADLSRYMPIHK.

A signal peptide spans Met1–Ala21. Mn(2+)-binding residues include His198, Asp222, His224, Asp226, Asp319, and Asp321.

Belongs to the arginase family. Mn(2+) is required as a cofactor.

The enzyme catalyses agmatine + H2O = urea + putrescine. The polypeptide is Putative agmatinase 3 (Schizosaccharomyces pombe (strain 972 / ATCC 24843) (Fission yeast)).